A 188-amino-acid chain; its full sequence is MDNQEKKTNYQNTDKENDLEKNKEKKNDESIFQNKKMNEIREKIFKNKKEINNLKLRHLANIENIKKNTEKKIKKIKNAEIENFFKQIIPIINNLEDILTISTKLNLNDEPSIQGIELTLKSLLSILIKFGVKIEGKKNEIFNPKIHDVILTESSNTIEPNYIISVKKKGFIFKKTILRKAAVVISKT.

Positions 1-29 (MDNQEKKTNYQNTDKENDLEKNKEKKNDE) are enriched in basic and acidic residues. A disordered region spans residues 1–33 (MDNQEKKTNYQNTDKENDLEKNKEKKNDESIFQ).

Belongs to the GrpE family. Homodimer.

Its subcellular location is the cytoplasm. Functionally, participates actively in the response to hyperosmotic and heat shock by preventing the aggregation of stress-denatured proteins, in association with DnaK and GrpE. It is the nucleotide exchange factor for DnaK and may function as a thermosensor. Unfolded proteins bind initially to DnaJ; upon interaction with the DnaJ-bound protein, DnaK hydrolyzes its bound ATP, resulting in the formation of a stable complex. GrpE releases ADP from DnaK; ATP binding to DnaK triggers the release of the substrate protein, thus completing the reaction cycle. Several rounds of ATP-dependent interactions between DnaJ, DnaK and GrpE are required for fully efficient folding. The polypeptide is Protein GrpE 2 (Buchnera aphidicola subsp. Schizaphis graminum (strain Sg)).